A 209-amino-acid polypeptide reads, in one-letter code: ATP synthase subunit b', chloroplastic (209 aa).

Residues Met1–Ala62 constitute a chloroplast transit peptide. Residues Ile67 to Phe87 form a helical membrane-spanning segment.

Belongs to the ATPase B chain family. In terms of assembly, F-type ATPases have 2 components, F(1) - the catalytic core - and F(0) - the membrane proton channel. F(1) has five subunits: alpha(3), beta(3), gamma(1), delta(1), epsilon(1). F(0) has four main subunits: a(1), b(1), b'(1) and c(10-14). The alpha and beta chains form an alternating ring which encloses part of the gamma chain. F(1) is attached to F(0) by a central stalk formed by the gamma and epsilon chains, while a peripheral stalk is formed by the delta, b and b' chains.

The protein resides in the plastid. It is found in the chloroplast thylakoid membrane. In terms of biological role, f(1)F(0) ATP synthase produces ATP from ADP in the presence of a proton or sodium gradient. F-type ATPases consist of two structural domains, F(1) containing the extramembraneous catalytic core and F(0) containing the membrane proton channel, linked together by a central stalk and a peripheral stalk. During catalysis, ATP synthesis in the catalytic domain of F(1) is coupled via a rotary mechanism of the central stalk subunits to proton translocation. Its function is as follows. Component of the F(0) channel, it forms part of the peripheral stalk, linking F(1) to F(0). The b'-subunit is a diverged and duplicated form of b found in plants and photosynthetic bacteria. The chain is ATP synthase subunit b', chloroplastic from Chlamydomonas reinhardtii (Chlamydomonas smithii).